The chain runs to 334 residues: Glycerol-3-phosphate dehydrogenase [NAD(P)+] (334 aa).

NADPH is bound by residues Trp14, Arg34, and Lys107. 2 residues coordinate sn-glycerol 3-phosphate: Lys107 and Gly135. Ala139 serves as a coordination point for NADPH. 5 residues coordinate sn-glycerol 3-phosphate: Lys190, Asp243, Ser253, Arg254, and Asn255. Lys190 (proton acceptor) is an active-site residue. Arg254 serves as a coordination point for NADPH. NADPH contacts are provided by Val272 and Glu273.

The protein belongs to the NAD-dependent glycerol-3-phosphate dehydrogenase family.

Its subcellular location is the cytoplasm. It carries out the reaction sn-glycerol 3-phosphate + NAD(+) = dihydroxyacetone phosphate + NADH + H(+). The catalysed reaction is sn-glycerol 3-phosphate + NADP(+) = dihydroxyacetone phosphate + NADPH + H(+). It functions in the pathway membrane lipid metabolism; glycerophospholipid metabolism. In terms of biological role, catalyzes the reduction of the glycolytic intermediate dihydroxyacetone phosphate (DHAP) to sn-glycerol 3-phosphate (G3P), the key precursor for phospholipid synthesis. The sequence is that of Glycerol-3-phosphate dehydrogenase [NAD(P)+] from Neorickettsia sennetsu (strain ATCC VR-367 / Miyayama) (Ehrlichia sennetsu).